The following is a 280-amino-acid chain: METIATRLAILPFPEIDPVIFTIGPLAVRWYGLAYVAGILLGWLYARRIIQNASLWRNGTAPFNLAQLDDFLLWAAGGIVLGGRIGYILFYDLGSILENPVRAIQIWNGGMSFHGGLLGTTLAIIIFARRNAIPLWSLFDVVAAVVPIGLFFGRIANFINGELWGRLSSMPWAVVFPTGGPFARHPSQLYEAALEGIVLLVVLAWFVYRRRALKMPGLVTGIFVCGYAASRIFVEFFREPDAQIGYLAGDWLTMGMVLSLPMALVGIWAIARARSAAAAA.

4 consecutive transmembrane segments (helical) span residues 30-50 (WYGLAYVAGILLGWLYARRII), 71-91 (FLLWAAGGIVLGGRIGYILFY), 106-126 (IWNGGMSFHGGLLGTTLAIII), and 132-152 (AIPLWSLFDVVAAVVPIGLFF). Arginine 154 contributes to the a 1,2-diacyl-sn-glycero-3-phospho-(1'-sn-glycerol) binding site. Helical transmembrane passes span 188–208 (QLYEAALEGIVLLVVLAWFVY), 217–237 (GLVTGIFVCGYAASRIFVEFF), and 251–271 (WLTMGMVLSLPMALVGIWAIA).

Belongs to the Lgt family.

Its subcellular location is the cell inner membrane. The enzyme catalyses L-cysteinyl-[prolipoprotein] + a 1,2-diacyl-sn-glycero-3-phospho-(1'-sn-glycerol) = an S-1,2-diacyl-sn-glyceryl-L-cysteinyl-[prolipoprotein] + sn-glycerol 1-phosphate + H(+). It functions in the pathway protein modification; lipoprotein biosynthesis (diacylglyceryl transfer). Its function is as follows. Catalyzes the transfer of the diacylglyceryl group from phosphatidylglycerol to the sulfhydryl group of the N-terminal cysteine of a prolipoprotein, the first step in the formation of mature lipoproteins. This is Phosphatidylglycerol--prolipoprotein diacylglyceryl transferase from Rhizobium meliloti (strain 1021) (Ensifer meliloti).